The following is a 311-amino-acid chain: MIKLLFMGTPQFSATVLKGLLDNPAYEILGVVTQPDRAVGRKKDIKVTPVKQLALEHGISIYQPEKLSGSQELIEIMGLGADGIITAAFGQFLPTILLDSVSFAINVHASLLPKYRGGAPIHYAIMNGDKEAGVTIMEMIKEMDAGDMVAKASTPILETDNVGTLFEKLAIIGRDLLLDSLPAYLSGELKPIPQDHSQATFSPNISPEHEKLDWTMSNQEVFNHIRGMNPWPVAHTFLEGQRLKIYEAQLAEGEGLPGQVIVKTKKSLVIATGQGALSLIVVQPAGKPKMSIIDFLNGIGRKLEVGDIIGR.

110–113 (SLLP) is a (6S)-5,6,7,8-tetrahydrofolate binding site.

Belongs to the Fmt family.

It catalyses the reaction L-methionyl-tRNA(fMet) + (6R)-10-formyltetrahydrofolate = N-formyl-L-methionyl-tRNA(fMet) + (6S)-5,6,7,8-tetrahydrofolate + H(+). Attaches a formyl group to the free amino group of methionyl-tRNA(fMet). The formyl group appears to play a dual role in the initiator identity of N-formylmethionyl-tRNA by promoting its recognition by IF2 and preventing the misappropriation of this tRNA by the elongation apparatus. This is Methionyl-tRNA formyltransferase from Streptococcus pyogenes serotype M49 (strain NZ131).